The primary structure comprises 3799 residues: Polyketide synthase GfsE (3799 aa).

A Ketosynthase family 3 (KS3) 1 domain is found at 33–459; that stretch reads HEPIAIIGMS…GTNAHAILEE (427 aa). 2 module regions span residues 33–1730 and 1749–3494; these read HEPI…RSSA and DEAI…RTDL. Active-site for beta-ketoacyl synthase 1 activity residues include cysteine 206, histidine 341, and histidine 381. The segment at 462–496 is disordered; it reads AATGNPTEADTDQEPAASASPDRTTTLPAVPWPLS. The Malonyl-CoA:ACP transacylase (MAT) 1 domain maps to 582-895; the sequence is FVFPGQGSQW…LGEAHAHGAD (314 aa). Residues 944 to 1069 form an N-terminal hotdog fold 1 region; that stretch reads HPLFGAVVEV…GVLELEARPE (126 aa). The PKS/mFAS DH 1 domain occupies 944-1222; sequence HPLFGAVVEV…SRPVAEEQLG (279 aa). Histidine 976 serves as the catalytic Proton acceptor; for dehydratase activity 1. The tract at residues 1081-1222 is C-terminal hotdog fold 1; it reads AEVVPVEGLY…SRPVAEEQLG (142 aa). The active-site Proton donor; for dehydratase activity 1 is aspartate 1142. The region spanning 1382 to 1554 is the Ketoreductase (KR) 1 domain; it reads LLVTGASGVL…TSLSWGLWAE (173 aa). Positions 1652 to 1730 constitute a Carrier 1 domain; it reads EAERAVLELV…ALATHIRSSA (79 aa). Position 1690 is an O-(pantetheine 4'-phosphoryl)serine (serine 1690). The 426-residue stretch at 1749-2174 folds into the Ketosynthase family 3 (KS3) 2 domain; the sequence is DEAIAIVGMA…GTNAHVILEQ (426 aa). Catalysis depends on for beta-ketoacyl synthase 2 activity residues cysteine 1921, histidine 2056, and histidine 2096. A Malonyl-CoA:ACP transacylase (MAT) 2 domain is found at 2284–2604; sequence FVFPGQGSQW…VSLAKVHTHG (321 aa). The interval 2656 to 2781 is N-terminal hotdog fold 2; that stretch reads HPLLTGVVDL…GTLAVDADHD (126 aa). Residues 2656 to 2936 enclose the PKS/mFAS DH 2 domain; sequence HPLLTGVVDL…TRPVTAAQFA (281 aa). Histidine 2688 (proton acceptor; for dehydratase activity 2) is an active-site residue. The tract at residues 2794 to 2936 is C-terminal hotdog fold 2; it reads ADPVDLTEVY…TRPVTAAQFA (143 aa). Aspartate 2855 (proton donor; for dehydratase activity 2) is an active-site residue. The Ketoreductase (KR) 2 domain maps to 3142 to 3314; it reads LLVTGASGVL…TALSWGLWAE (173 aa). A Carrier 2 domain is found at 3419-3494; it reads AALLDLVGAQ…ALAAQLRTDL (76 aa). Position 3454 is an O-(pantetheine 4'-phosphoryl)serine (serine 3454).

Pantetheine 4'-phosphate is required as a cofactor.

The protein operates within antibiotic biosynthesis. In terms of biological role, fifth protein in the synthesis of the 16-membered macrolide antibiotics FD-891 and FD-892. Composed of 2 modules. Modifies the product of GfsD by multiple rounds of addition of methylmalonyl-CoA and other modifications to help generate the final products. This is Polyketide synthase GfsE from Streptomyces halstedii.